Consider the following 715-residue polypeptide: Nucleolar protein 9 (715 aa).

Residues 1-52 (MPKPRGRRVQSAFKERVENSEATHENSIAETGSDVEISLHEDQPQTSDNKNQ) are disordered. Basic and acidic residues predominate over residues 13–24 (FKERVENSEATH). Pumilio repeat units follow at residues 99 to 134 (ESRG…HIFH), 135 to 170 (QFLG…EIVN), 206 to 243 (QLEP…TMAN), 291 to 326 (LDTK…RSVW), 340 to 377 (SEEA…RLYR), 379 to 415 (YMKD…HILD), 531 to 568 (LPQE…EVLI), and 575 to 613 (NLFQ…RIAS). The segment covering 688 to 698 (YQEERAKREGE) has biased composition (basic and acidic residues). The interval 688 to 715 (YQEERAKREGEDLAGSNQKRMKGRGRNR) is disordered. The span at 706–715 (KRMKGRGRNR) shows a compositional bias: basic residues.

Belongs to the NOP9 family.

It localises to the nucleus. It is found in the nucleolus. Its function is as follows. RNA-binding nucleolar protein required for pre-rRNA processing. Involved in production of 18S rRNA and assembly of small ribosomal subunit. The polypeptide is Nucleolar protein 9 (NOP9) (Clavispora lusitaniae (strain ATCC 42720) (Yeast)).